The primary structure comprises 868 residues: Probable inorganic carbon transporter subunit DabA (868 aa).

Zn(2+) contacts are provided by Cys392, Asp394, His574, and Cys589.

The protein belongs to the inorganic carbon transporter (TC 9.A.2) DabA family. Forms a complex with DabB. Requires Zn(2+) as cofactor.

It localises to the cell membrane. Part of an energy-coupled inorganic carbon pump. In Bacillus cereus (strain G9842), this protein is Probable inorganic carbon transporter subunit DabA.